Reading from the N-terminus, the 327-residue chain is Probable tRNA-dihydrouridine synthase (327 aa).

Residues 17–19 (PMS) and Q72 contribute to the FMN site. Catalysis depends on C102, which acts as the Proton donor. FMN contacts are provided by residues K141, 202 to 204 (NGD), and 226 to 227 (GR).

It belongs to the Dus family. The cofactor is FMN.

It catalyses the reaction a 5,6-dihydrouridine in tRNA + NAD(+) = a uridine in tRNA + NADH + H(+). The enzyme catalyses a 5,6-dihydrouridine in tRNA + NADP(+) = a uridine in tRNA + NADPH + H(+). Catalyzes the synthesis of 5,6-dihydrouridine (D), a modified base found in the D-loop of most tRNAs, via the reduction of the C5-C6 double bond in target uridines. This Rickettsia typhi (strain ATCC VR-144 / Wilmington) protein is Probable tRNA-dihydrouridine synthase (dus).